Consider the following 300-residue polypeptide: Large ribosomal subunit protein bL9m (300 aa).

The protein belongs to the bacterial ribosomal protein bL9 family. Component of the mitochondrial large ribosomal subunit (mt-LSU). Mature N.crassa 74S mitochondrial ribosomes consist of a small (37S) and a large (54S) subunit. The 37S small subunit contains a 16S ribosomal RNA (16S mt-rRNA) and 32 different proteins. The 54S large subunit contains a 23S rRNA (23S mt-rRNA) and 42 different proteins.

Its subcellular location is the mitochondrion. Functionally, component of the mitochondrial ribosome (mitoribosome), a dedicated translation machinery responsible for the synthesis of mitochondrial genome-encoded proteins, including at least some of the essential transmembrane subunits of the mitochondrial respiratory chain. The mitoribosomes are attached to the mitochondrial inner membrane and translation products are cotranslationally integrated into the membrane. This Neurospora crassa (strain ATCC 24698 / 74-OR23-1A / CBS 708.71 / DSM 1257 / FGSC 987) protein is Large ribosomal subunit protein bL9m (mrpl50).